The primary structure comprises 312 residues: Methionyl-tRNA formyltransferase (312 aa).

109 to 112 is a (6S)-5,6,7,8-tetrahydrofolate binding site; that stretch reads SLLP.

This sequence belongs to the Fmt family.

The enzyme catalyses L-methionyl-tRNA(fMet) + (6R)-10-formyltetrahydrofolate = N-formyl-L-methionyl-tRNA(fMet) + (6S)-5,6,7,8-tetrahydrofolate + H(+). Functionally, attaches a formyl group to the free amino group of methionyl-tRNA(fMet). The formyl group appears to play a dual role in the initiator identity of N-formylmethionyl-tRNA by promoting its recognition by IF2 and preventing the misappropriation of this tRNA by the elongation apparatus. The sequence is that of Methionyl-tRNA formyltransferase from Listeria monocytogenes serotype 4b (strain CLIP80459).